The chain runs to 992 residues: RNA-binding protein 12 (992 aa).

In terms of domain architecture, RRM 1 spans 304–379 (LYVSVHGMPF…RYVEVSPATE (76 aa)). Serine 352 and serine 375 each carry phosphoserine. The segment at 393 to 424 (QSMGPSGQAHPPPQTLPRSKSPSGQKRSRSRS) is disordered. The span at 408 to 417 (LPRSKSPSGQ) shows a compositional bias: polar residues. Phosphoserine occurs at positions 420, 422, and 424. The RRM 2 domain occupies 430 to 507 (FCVYLKGLPF…RFIQVHPITK (78 aa)). Serine 525 bears the Phosphoserine mark. The segment at 849–913 (FGGIPQNFGN…PGFGASSGKP (65 aa)) is disordered. The segment covering 876 to 887 (LGSVPGHLSGPP) has biased composition (low complexity). In terms of domain architecture, RRM 3 spans 916 to 992 (TIIKVQNMPF…GSRKVKLVLG (77 aa)).

It localises to the nucleus. This Mus musculus (Mouse) protein is RNA-binding protein 12 (Rbm12).